A 1561-amino-acid chain; its full sequence is Synemin (1561 aa).

The head stretch occupies residues 1–10; sequence MLSWRLQTGS. A coil 1A region spans residues 11 to 49; that stretch reads EKAELQELNARLYDYVCRVRELERENLLLEEELRSRLSR. The tract at residues 11-320 is interaction with DMD and UTRN; that stretch reads EKAELQELNA…YRALLEGESN (310 aa). One can recognise an IF rod domain in the interval 11-322; sequence EKAELQELNA…ALLEGESNPE (312 aa). The interval 50-58 is linker 1; sequence EDRWAEDQA. The tract at residues 59 to 163 is coil 1B; it reads LYAEEARSLR…DLRARAASLT (105 aa). Residues 164–186 form a linker 12 region; sequence MHFRARATSPAAPPPRLRDVHDS. The tract at residues 187-300 is coil 2; sequence YALLVAESWR…LRDYQELLQV (114 aa). The tail stretch occupies residues 301–1561; sequence KTGLSLEVAT…EEEEEGEGWF (1261 aa). Composition is skewed to polar residues over residues 371-390 and 401-421; these read SSAS…TTAV and SRHS…KTIS. Disordered regions lie at residues 371-421, 549-574, and 591-637; these read SSAS…KTIS, DARK…RSVK, and EVST…DSTT. Residues 601 to 624 show a composition bias toward basic and acidic residues; it reads GRKDVSHSGGREAETKETRFRLDT. Over residues 625–637 the composition is skewed to polar residues; that stretch reads QDTASSLQSDSTT. Position 653 is a phosphothreonine (T653). A phosphoserine mark is found at S655, S778, S780, S1044, S1049, S1077, S1087, S1179, and S1182. 2 disordered regions span residues 1033-1061 and 1075-1099; these read SVVR…VPAG and SPSG…QGPV. Polar residues predominate over residues 1086–1099; the sequence is VSPSSDQRVTQGPV. Positions 1152–1453 are interaction with TLN1 and VCL; the sequence is VSGDFSEAVS…GPKETSFTFQ (302 aa). Residues 1212–1231 are disordered; sequence ADISGSGRMPGSERSHTEKE. A compositionally biased stretch (basic and acidic residues) spans 1222 to 1231; it reads GSERSHTEKE. An interaction with DMD and UTRN region spans residues 1242 to 1557; it reads AQVGGNFATE…DNEEEEEEEG (316 aa). S1425 carries the phosphoserine modification. Residue R1481 is modified to Omega-N-methylarginine. The tract at residues 1491 to 1519 is disordered; that stretch reads DERVASTGSGASPGDAHQAPGEKGTEQAG.

This sequence belongs to the intermediate filament family. As to quaternary structure, interacts with DES, DMD, DTNA, TLN1, UTRN and VCL. Isoform 1 and isoform 2 interact with GFAP and VIM. As to expression, isoform 2 and isoform 3 are detected in adult skeletal muscle, heart and bladder, whereas isoform 1 is only detected in adult bladder (at protein level).

Its subcellular location is the cytoplasm. It localises to the cytoskeleton. It is found in the cell junction. The protein resides in the adherens junction. In terms of biological role, type-VI intermediate filament (IF) which plays an important cytoskeletal role within the muscle cell cytoskeleton. It forms heteromeric IFs with desmin and/or vimentin, and via its interaction with cytoskeletal proteins alpha-dystrobrevin, dystrophin, talin-1, utrophin and vinculin, is able to link these heteromeric IFs to adherens-type junctions, such as to the costameres, neuromuscular junctions, and myotendinous junctions within striated muscle cells. The sequence is that of Synemin from Mus musculus (Mouse).